Consider the following 511-residue polypeptide: Vesicular acetylcholine transporter (511 aa).

The Cytoplasmic portion of the chain corresponds to M1–K36. The helical transmembrane segment at I37–V57 threads the bilayer. Residues P58–G108 are Lumenal, vesicle-facing. N-linked (GlcNAc...) asparagine glycans are attached at residues N80, N83, and N88. A helical membrane pass occupies residues V109–I129. Residues D130–D135 lie on the Cytoplasmic side of the membrane. A helical membrane pass occupies residues I136 to E156. The Lumenal, vesicle segment spans residues S157–R165. The chain crosses the membrane as a helical span at residues S166–K186. Topologically, residues Y187 to L197 are cytoplasmic. A helical transmembrane segment spans residues G198 to L218. Over Y219–W225 the chain is Lumenal, vesicle. Residues V226–V246 traverse the membrane as a helical segment. Residues T247–M267 lie on the Cytoplasmic side of the membrane. A helical membrane pass occupies residues I268–F288. Over L289–W306 the chain is Lumenal, vesicle. An N-linked (GlcNAc...) asparagine glycan is attached at N302. The helical transmembrane segment at Q307–V327 threads the bilayer. Residues K328 to Q337 lie on the Cytoplasmic side of the membrane. Residues W338–C358 form a helical membrane-spanning segment. Over R359–E363 the chain is Lumenal, vesicle. A helical transmembrane segment spans residues L364–P384. At T385–S400 the chain is on the cytoplasmic side. The helical transmembrane segment at V401–G421 threads the bilayer. Residues Q422–G428 are Lumenal, vesicle-facing. A helical membrane pass occupies residues F429–F449. The Cytoplasmic segment spans residues L450 to E511. Positions E485–E511 are disordered.

It belongs to the major facilitator superfamily. Vesicular transporter family. As to expression, high expression in the electric lobe of the brain.

It is found in the membrane. In terms of biological role, involved in acetylcholine transport into synaptic vesicles. This Torpedo marmorata (Marbled electric ray) protein is Vesicular acetylcholine transporter.